Here is a 495-residue protein sequence, read N- to C-terminus: Sialin (495 aa).

A disordered region spans residues 1–24; it reads MKSPVSDLAPSDGEEGSDRTPLLQ. Ser3 carries the post-translational modification Phosphoserine. Residues 22 to 23 carry the Dileucine internalization motif motif; sequence LL. Residues 42–62 form a helical membrane-spanning segment; that stretch reads LAFLSFFGFFVLYSLRVNLSV. Asn71, Asn77, and Asn95 each carry an N-linked (GlcNAc...) asparagine glycan. 11 helical membrane-spanning segments follow: residues 110 to 130, 137 to 157, 159 to 179, 201 to 221, 228 to 248, 289 to 309, 329 to 349, 366 to 386, 392 to 412, 424 to 444, and 458 to 478; these read WILGSFFYGYIITQIPGGYVA, LLLGFGIFATAIFTLFTPLAA, FGVGALVALRALEGLGEGVTY, ISYAGAQLGTVVSLPLSGVIC, YVFYFFGIVGIIWFILWICLV, LPLWAIVVAHFSYNWTFYTLL, FLSAVPYLGCWLCMILSGQAA, VFSLIGMIGPAIFLVAAGFIG, AVAFLTISTTLGGFCSSGFSI, ILLGITNTFATIPGMIGPIIA, and TVFCIAAAINVFGAIFFTLFA.

It belongs to the major facilitator superfamily. Sodium/anion cotransporter family. Significantly expressed in lung endothelial cells, and much less in liver.

Its subcellular location is the basolateral cell membrane. The protein localises to the cytoplasmic vesicle. The protein resides in the secretory vesicle. It localises to the synaptic vesicle membrane. It is found in the lysosome membrane. The catalysed reaction is N-acetylneuraminate(in) + H(+)(in) = N-acetylneuraminate(out) + H(+)(out). It carries out the reaction D-glucuronate(out) + H(+)(out) = D-glucuronate(in) + H(+)(in). The enzyme catalyses 2 nitrate(out) + H(+)(out) = 2 nitrate(in) + H(+)(in). It catalyses the reaction L-aspartate(out) = L-aspartate(in). The catalysed reaction is L-glutamate(out) = L-glutamate(in). It carries out the reaction N-acetyl-L-aspartyl-L-glutamate(out) = N-acetyl-L-aspartyl-L-glutamate(in). Its function is as follows. Multifunctional anion transporter that operates via two distinct transport mechanisms, namely proton-coupled anion cotransport and membrane potential-dependent anion transport. Electroneutral proton-coupled acidic monosaccharide symporter, with a sugar to proton stoichiometry of 1:1. Exports glucuronic acid and free sialic acid derived from sialoglycoconjugate degradation out of lysosomes, driven by outwardly directed lysosomal pH gradient. May regulate lysosome function and metabolism of sialylated conjugates that impact oligodendrocyte lineage differentiation and myelinogenesis in the central nervous system. Electrogenic proton-coupled nitrate symporter that transports nitrate ions across the basolateral membrane of salivary gland acinar cells, with nitrate to proton stoichiometry of 2:1. May contribute to nitrate clearance from serum by salivary glands, where it is further concentrated and secreted in the saliva. Uses membrane potential to drive the uptake of acidic amino acids and peptides into synaptic vesicles. Responsible for synaptic vesicular storage of L-aspartate and L-glutamate in pinealocytes as well as vesicular uptake of N-acetyl-L-aspartyl-L-glutamate neuropeptide, relevant to aspartegic-associated glutamatergic neurotransmission and activation of metabotropic receptors that inhibit subsequent transmitter release. Functionally, receptor for CM101, a polysaccharide produced by group B Streptococcus with antipathoangiogenic properties. The protein is Sialin (SLC17A5) of Ovis aries (Sheep).